The primary structure comprises 134 residues: Cytochrome b5 (134 aa).

Position 2 is an N-acetylalanine (Ala-2). Residues Lys-7, Lys-10, and Lys-19 each carry the N6-acetyllysine modification. In terms of domain architecture, Cytochrome b5 heme-binding spans 9-85 (VKYYTLEEIQ…SKTFIIGELH (77 aa)). Residues His-44 and His-68 each coordinate heme. The chain crosses the membrane as a helical span at residues 109-131 (WWTNWLIPAISALFVALIYHLYT).

This sequence belongs to the cytochrome b5 family.

The protein localises to the endoplasmic reticulum membrane. It localises to the microsome membrane. Functionally, cytochrome b5 is a membrane-bound hemoprotein functioning as an electron carrier for several membrane-bound oxygenases. The polypeptide is Cytochrome b5 (CYB5A) (Bos taurus (Bovine)).